A 983-amino-acid polypeptide reads, in one-letter code: Protein translocase subunit SecA (983 aa).

Residues Gln83, 101–105 (GEGKT), and Asp489 each bind ATP. Positions 948–983 (ISSEEEDNNEKTNINNNEDLERTKGEAQQTAKNPNE) are disordered. Residues 973 to 983 (EAQQTAKNPNE) are compositionally biased toward polar residues.

It belongs to the SecA family. Monomer and homodimer. Part of the essential Sec protein translocation apparatus which comprises SecA, SecYEG and auxiliary proteins SecDF. Other proteins may also be involved.

Its subcellular location is the cell membrane. It localises to the cytoplasm. It carries out the reaction ATP + H2O + cellular proteinSide 1 = ADP + phosphate + cellular proteinSide 2.. In terms of biological role, part of the Sec protein translocase complex. Interacts with the SecYEG preprotein conducting channel. Has a central role in coupling the hydrolysis of ATP to the transfer of proteins into and across the cell membrane, serving as an ATP-driven molecular motor driving the stepwise translocation of polypeptide chains across the membrane. The sequence is that of Protein translocase subunit SecA from Mesomycoplasma hyopneumoniae (strain J / ATCC 25934 / NCTC 10110) (Mycoplasma hyopneumoniae).